We begin with the raw amino-acid sequence, 115 residues long: MSLDMQEWREETTAIVNELLADGSNPDLEYEIEHHFACQDFDLLEKAAVDLFKAGFEVTDAEEMELDDGATIFCFDATTECKLDIETIVADIAKMLPILEKYGVDYDGWGTYFQE.

This sequence belongs to the RraB family. In terms of assembly, interacts with the C-terminal region of Rne.

The protein localises to the cytoplasm. Its function is as follows. Globally modulates RNA abundance by binding to RNase E (Rne) and regulating its endonucleolytic activity. Can modulate Rne action in a substrate-dependent manner by altering the composition of the degradosome. This is Regulator of ribonuclease activity B from Aeromonas hydrophila subsp. hydrophila (strain ATCC 7966 / DSM 30187 / BCRC 13018 / CCUG 14551 / JCM 1027 / KCTC 2358 / NCIMB 9240 / NCTC 8049).